A 481-amino-acid polypeptide reads, in one-letter code: Proline--tRNA ligase 2 (481 aa).

Belongs to the class-II aminoacyl-tRNA synthetase family. ProS type 3 subfamily. As to quaternary structure, homodimer.

The protein localises to the cytoplasm. It catalyses the reaction tRNA(Pro) + L-proline + ATP = L-prolyl-tRNA(Pro) + AMP + diphosphate. Its function is as follows. Catalyzes the attachment of proline to tRNA(Pro) in a two-step reaction: proline is first activated by ATP to form Pro-AMP and then transferred to the acceptor end of tRNA(Pro). The polypeptide is Proline--tRNA ligase 2 (Clostridioides difficile (strain 630) (Peptoclostridium difficile)).